The sequence spans 439 residues: GTPase Der (439 aa).

EngA-type G domains follow at residues 4–168 (PIVA…KDDE) and 177–352 (INIA…DNYT). GTP contacts are provided by residues 10–17 (GRPNVGKS), 57–61 (DTGGI), 120–123 (NKID), 183–190 (GKPNVGKS), 230–234 (DTAGL), and 295–298 (NKWD). The 85-residue stretch at 353-437 (KRVKTGVLND…GIKLEFRERK (85 aa)) folds into the KH-like domain.

The protein belongs to the TRAFAC class TrmE-Era-EngA-EngB-Septin-like GTPase superfamily. EngA (Der) GTPase family. Associates with the 50S ribosomal subunit.

Its function is as follows. GTPase that plays an essential role in the late steps of ribosome biogenesis. The chain is GTPase Der from Clostridium botulinum (strain Okra / Type B1).